The primary structure comprises 286 residues: Simplagrin (286 aa).

An N-terminal signal peptide occupies residues 1–20 (MKKFCLIFLLLALTALHVKG). The interval 17–179 (HVKGSPIPDE…GSSSGGEESA (163 aa)) is disordered. Composition is skewed to acidic residues over residues 24-69 (PDEE…DGQE) and 103-129 (VESGGDEQNDGEENGSQENGEEVTGGE). Asn116 is a glycosylation site (N-linked (GlcNAc...) asparagine). Low complexity predominate over residues 166 to 177 (SNRAGSSSGGEE).

This sequence belongs to the aegyptin family. As to quaternary structure, monomeric in solution; likely has an elongated non-globular form. Interacts with human and rat collagens (via a RGQOGVMGF peptide, where O is hydroxyproline). In terms of processing, not glycosylated. In terms of tissue distribution, salivary gland.

Its subcellular location is the secreted. In terms of biological role, inhibits host platelet aggregation induced by low concentrations of collagen via blocking the von Willebrand Factor (VWF) interaction with collagen. In Simulium nigrimanum (Black fly), this protein is Simplagrin.